The chain runs to 132 residues: Interleukin-5 (132 aa).

An N-terminal signal peptide occupies residues 1–19 (MRMLLHLSILTLACVWTFA). Residues N45, N74, and N88 are each glycosylated (N-linked (GlcNAc...) asparagine).

Belongs to the IL-5 family. Homodimer; disulfide-linked. Interacts with IL5RA. Interacts with CSF2RB.

It localises to the secreted. Homodimeric cytokine expressed predominantly by T-lymphocytes and NK cells that plays an important role in the survival, differentiation, and chemotaxis of eosinophils. Also acts on activated and resting B-cells to induce immunoglobulin production, growth, and differentiation. Mechanistically, exerts its biological effects through a receptor composed of IL5RA subunit and the cytokine receptor common subunit beta/CSF2RB. Binding to the receptor leads to activation of various kinases including LYN, SYK and JAK2 and thereby propagates signals through the RAS-MAPK and JAK-STAT5 pathways respectively. The chain is Interleukin-5 (IL5) from Sigmodon hispidus (Hispid cotton rat).